Consider the following 875-residue polypeptide: Aminopeptidase M1-B (875 aa).

The interval 96 to 203 (IGEGVLKMDF…MSTYLVAIVV (108 aa)) is required for membrane association. Residues Glu-136 and 269-273 (GAMEN) contribute to the substrate site. Zn(2+) is bound at residue His-305. Glu-306 acts as the Proton acceptor in catalysis. 2 residues coordinate Zn(2+): His-309 and Glu-328. The Dileucine internalization motif signature appears at 722–723 (LL).

This sequence belongs to the peptidase M1 family. As to quaternary structure, homodimer. It depends on Zn(2+) as a cofactor.

It is found in the membrane. The protein resides in the microsome membrane. Its subcellular location is the cytoplasm. It catalyses the reaction Release of an N-terminal amino acid, Xaa-|-Yaa- from a peptide, amide or arylamide. Xaa is preferably Ala, but may be most amino acids including Pro (slow action). When a terminal hydrophobic residue is followed by a prolyl residue, the two may be released as an intact Xaa-Pro dipeptide.. The sequence is that of Aminopeptidase M1-B from Oryza sativa subsp. japonica (Rice).